A 379-amino-acid chain; its full sequence is Cell division protein FtsZ (379 aa).

GTP contacts are provided by residues 18–22, 105–107, glutamate 136, arginine 140, and aspartate 184; these read GGGVN and GTG.

The protein belongs to the FtsZ family. In terms of assembly, homodimer. Polymerizes to form a dynamic ring structure in a strictly GTP-dependent manner. Interacts directly with several other division proteins.

The protein localises to the cytoplasm. In terms of biological role, essential cell division protein that forms a contractile ring structure (Z ring) at the future cell division site. The regulation of the ring assembly controls the timing and the location of cell division. One of the functions of the FtsZ ring is to recruit other cell division proteins to the septum to produce a new cell wall between the dividing cells. Binds GTP and shows GTPase activity. The protein is Cell division protein FtsZ of Mycobacterium bovis (strain ATCC BAA-935 / AF2122/97).